A 307-amino-acid chain; its full sequence is Taste receptor type 2 member 10 (307 aa).

Topologically, residues 1-6 (MLRVVE) are extracellular. The chain crosses the membrane as a helical span at residues 7 to 27 (GIFIFVVISEXVFGVLGNGFI). The Cytoplasmic portion of the chain corresponds to 28–42 (GLVNCIDCAKNKLST). The chain crosses the membrane as a helical span at residues 43–63 (IGFILTGLAISRIFLIWIIIT). The Extracellular portion of the chain corresponds to 64–100 (DGFIQIFSPDIYASGNLIEYISYFWVIGNQSSMWFAT). An N-linked (GlcNAc...) asparagine glycan is attached at Asn92. A helical membrane pass occupies residues 101–121 (SLSIFYFLKIANFSNYIFLWL). Topologically, residues 122–126 (KSRTN) are cytoplasmic. A helical transmembrane segment spans residues 127-147 (MVLPFMIVFLLISSLLNFAHI). Residues 148 to 179 (AKILNDYKMKNDTVWDLNMYKSEYFIKQILLN) lie on the Extracellular side of the membrane. Asn158 carries N-linked (GlcNAc...) asparagine glycosylation. The chain crosses the membrane as a helical span at residues 180-200 (LGVIFFFTLSLITCVFLIISL). Over 201 to 227 (WRHNRQMQSNVTGLRDSNTEAHVKAMK) the chain is Cytoplasmic. Residues 228–248 (VLISFXILFILYFIGMAIEIS) traverse the membrane as a helical segment. At 249-257 (CFTVRENKL) the chain is on the extracellular side. Residues 258-278 (LLMFGMTTTAIYPWGHSFILI) traverse the membrane as a helical segment. Topologically, residues 279–307 (LGNSKLKQASLRVLQQLKCCEKRKNLRVT) are cytoplasmic.

Belongs to the G-protein coupled receptor T2R family.

The protein localises to the membrane. Functionally, receptor that may play a role in the perception of bitterness and is gustducin-linked. May play a role in sensing the chemical composition of the gastrointestinal content. The activity of this receptor may stimulate alpha gustducin, mediate PLC-beta-2 activation and lead to the gating of TRPM5. The protein is Taste receptor type 2 member 10 (TAS2R10) of Gorilla gorilla gorilla (Western lowland gorilla).